The following is a 377-amino-acid chain: Probable dehydratase NIT22 (377 aa).

Residues lysine 101 and arginine 196 each coordinate NADP(+). Residues 220–243 are disordered; that stretch reads ERGPKMNEHVPSTPPRRPDAVSSF. A MaoC-like domain is found at 233-332; that stretch reads PPRRPDAVSS…ILMWDMGLCK (100 aa). NADP(+) is bound by residues threonine 265 and isoleucine 287.

Belongs to the short-chain dehydrogenases/reductases (SDR) family.

The protein operates within siderophore biosynthesis. In terms of biological role, probable dehydratase; part of the gene cluster that mediates the biosynthesis of hydroxamate-containing siderophores that play a critical role in virulence via intracellular iron acquisition during macrophage infection. The polypeptide is Probable dehydratase NIT22 (Ajellomyces capsulatus (Darling's disease fungus)).